A 288-amino-acid polypeptide reads, in one-letter code: NAD(P)H quinone oxidoreductase YCP4 (288 aa).

Residues 3–192 (IAIIQYSTYG…EIAEKQGEAF (190 aa)) form the Flavodoxin-like domain. Residues 9-13 (STYGH) and 110-164 (VFVS…SPYG) each bind FMN. Positions 202 to 288 (GSKKTNTTTT…KSSCSKCIIM (87 aa)) are disordered. Residues 205–254 (KTNTTTTSKSAATSDAAGTTSGTAAGTSAATGAATGTSAPKESTKEASSS) are compositionally biased toward low complexity. Polar residues predominate over residues 261-288 (NGTATRTQQSTKAPETAEKSSCSKCIIM).

Belongs to the WrbA family. FMN is required as a cofactor.

It is found in the cell membrane. It carries out the reaction a quinone + NADH + H(+) = a quinol + NAD(+). The enzyme catalyses a quinone + NADPH + H(+) = a quinol + NADP(+). Functionally, flavodoxin-like protein (FLP) that plays a role in cell wall integrity, oxidative stress protection and virulence. FLPs act as NAD(P)H quinone oxidoreductases. Reduces ubiquinone (coenzyme Q), enabling it to serve as an antioxidant in the membrane. In Candida albicans (strain SC5314 / ATCC MYA-2876) (Yeast), this protein is NAD(P)H quinone oxidoreductase YCP4.